Consider the following 519-residue polypeptide: NAD-dependent histone deacetylase SIR2 (519 aa).

The disordered stretch occupies residues 154 to 212; sequence EIDENDNKNDGTNNSDIDSDIDSNSDMDSQSESGELDDAMDVDDSLSENEDEYDQDMST. Acidic residues predominate over residues 187–208; the sequence is GELDDAMDVDDSLSENEDEYDQ. A Deacetylase sirtuin-type domain is found at 221-486; the sequence is MTPFKYKLPD…SYLCKCLKWD (266 aa). Residues 246-265 and 328-331 contribute to the NAD(+) site; these read GAGI…KGLY and QNID. His-348 acts as the Proton acceptor in catalysis. Residues Cys-356, Cys-359, Cys-380, and Cys-383 each coordinate Zn(2+). NAD(+) contacts are provided by residues 430–432, 455–457, and Cys-472; these read GTS and NKD.

It belongs to the sirtuin family. Class I subfamily. Interacts with HXK1. Zn(2+) is required as a cofactor.

The protein localises to the nucleus. It catalyses the reaction N(6)-acetyl-L-lysyl-[protein] + NAD(+) + H2O = 2''-O-acetyl-ADP-D-ribose + nicotinamide + L-lysyl-[protein]. NAD-dependent deacetylase. Heterochromatin component that silences transcription at silent mating loci, telomeres and the ribosomal DNA, and that also suppresses recombination in the rDNA and extends replicative life span. It acts as a NAD-dependent histone deacetylase, which deacetylates 'Lys-9' and 'Lys-14' of Histone H3 and 'Lys-16' of Histone H4. Functions in the distribution of oxidatively damaged proteins during cell division. Mediates phenotypic switching. The chain is NAD-dependent histone deacetylase SIR2 from Candida albicans (strain SC5314 / ATCC MYA-2876) (Yeast).